A 443-amino-acid polypeptide reads, in one-letter code: Nitrate/nitrite binding protein NrtA (443 aa).

The N-terminal stretch at 1 to 25 (MSQFSRRKFLLTAGGTAAAALWLNA) is a signal peptide. Cys-26 carries the N-palmitoyl cysteine lipid modification. Cys-26 carries the S-diacylglycerol cysteine lipid modification. A compositionally biased stretch (low complexity) spans 31–46 (SSTDTTGSTSTPAPSG). A disordered region spans residues 31 to 52 (SSTDTTGSTSTPAPSGTSGGDA). Residues Trp-96, Gln-150, His-195, Gly-239, and Lys-268 each coordinate nitrate.

Belongs to the CmpA/NrtA family. In terms of assembly, the complex is composed of two ATP-binding proteins (NrtC and NrtD), two transmembrane proteins (NrtB) and a solute-binding protein (NrtA). NrtA can form homotrimers. In terms of processing, the N-terminus is blocked.

Its subcellular location is the cell inner membrane. Its function is as follows. Part of the ABC transporter complex NrtABCD involved in nitrate uptake. The complex is probably also involved in nitrite transport. NrtA is the substrate-binding protein. Binds both nitrate and nitrite with high affinity. The protein is Nitrate/nitrite binding protein NrtA of Synechococcus elongatus (strain ATCC 33912 / PCC 7942 / FACHB-805) (Anacystis nidulans R2).